We begin with the raw amino-acid sequence, 557 residues long: Potassium-transporting ATPase potassium-binding subunit (557 aa).

A run of 12 helical transmembrane segments spans residues Gly-5 to Ser-25, Leu-63 to Gly-83, Gly-132 to Ile-152, Leu-170 to Ile-190, Phe-253 to Val-273, Leu-283 to Val-303, Val-329 to Ala-349, Ala-356 to Val-376, Gly-379 to Gly-399, Leu-416 to Met-436, Leu-484 to Ala-504, and Leu-526 to Ala-546.

This sequence belongs to the KdpA family. The system is composed of three essential subunits: KdpA, KdpB and KdpC.

Its subcellular location is the cell inner membrane. Part of the high-affinity ATP-driven potassium transport (or Kdp) system, which catalyzes the hydrolysis of ATP coupled with the electrogenic transport of potassium into the cytoplasm. This subunit binds the periplasmic potassium ions and delivers the ions to the membrane domain of KdpB through an intramembrane tunnel. This chain is Potassium-transporting ATPase potassium-binding subunit, found in Escherichia coli (strain SMS-3-5 / SECEC).